The sequence spans 308 residues: 3'(2'),5'-bisphosphate nucleotidase 1 (308 aa).

N-acetylalanine is present on alanine 2. Aspartate 51 acts as the Proton acceptor in catalysis. Positions 74, 117, 119, and 120 each coordinate Mg(2+). The active-site Proton acceptor is the threonine 122. Position 122 is a phosphothreonine (threonine 122). Positions 195, 198, 220, and 224 each coordinate AMP. Phosphoserine is present on serine 240. At lysine 244 the chain carries N6-succinyllysine. Aspartate 247 is a Mg(2+) binding site.

The protein belongs to the inositol monophosphatase superfamily. Mg(2+) is required as a cofactor. As to expression, widely expressed. Highly expressed in kidney.

The enzyme catalyses adenosine 3',5'-bisphosphate + H2O = AMP + phosphate. The catalysed reaction is adenosine 2',5'-bisphosphate + H2O = AMP + phosphate. It catalyses the reaction 3'-phosphoadenylyl sulfate + H2O = adenosine 5'-phosphosulfate + phosphate. It carries out the reaction 1D-myo-inositol 1,4-bisphosphate + H2O = 1D-myo-inositol 4-phosphate + phosphate. The enzyme catalyses 1D-myo-inositol 1,3,4-trisphosphate + H2O = 1D-myo-inositol 3,4-bisphosphate + phosphate. Uncompetitively inhibited by Li(+) (IC(50)=157 uM). PAP hydrolysis is competitively inhibited by PAPS (IC(50)=0.7 uM) and by inositol 1,4-bisphosphate (IC(50)=15 uM). Phosphatase that converts 3'(2')-phosphoadenosine 5'-phosphate (PAP) to AMP and adenosine 3'-phosphate 5'-phosphosulfate (PAPS) to adenosine 5'-phosphosulfate (APS). Is also able to hydrolyze inositol 1,4-bisphosphate (Ins(1,4)P2) and inositol 1,3,4-trisphosphate (Ins(1,3,4)P3), and is not active on Ins(1)P, Ins(4)P, Ins(3,4)P2, Ins(1,4,5)P3, Ins(1,3,4,5)P4, Ins(1,3,4,5,6)P5 or InsP6. Probably prevents the toxic accumulation of PAP, a compound which inhibits a variety of proteins, including PAPS-utilizing enzymes such as sulfotransferases, and RNA processing enzymes. Could also play a role in inositol recycling and phosphoinositide metabolism. The chain is 3'(2'),5'-bisphosphate nucleotidase 1 (Bpnt1) from Mus musculus (Mouse).